We begin with the raw amino-acid sequence, 269 residues long: MNSLRVLKIFRSVSRSIRIPASNGCINLGRNAYRVQLAKAPFSFSSIRRSSHTAGNPRSKLINALSSEIDYEKNQVLSEISLPPVNYDIEDVQGSAVVVLKAKHGDENIRITMNVSQDVTDAVPEEQDFTEFEDEQELQNQGESAEDEFPNEDLGRFQPCTIEISKPGNGALVFEATALDDGFDIENIYFSKDIDMLTSDSLEAEWKRRKQYLGPSFKELDPELQDLFHSYLEERKIDESLSSFIVSFGLTKELKEYINWLESVRQFLK.

The protein belongs to the MAM33 family.

Its subcellular location is the cytoplasm. It localises to the mitochondrion matrix. The sequence is that of Mitochondrial acidic protein mam33 from Schizosaccharomyces pombe (strain 972 / ATCC 24843) (Fission yeast).